The chain runs to 88 residues: M-zodatoxin-Lt1a (88 aa).

The signal sequence occupies residues 1–22 (MKYFVVALALAVALVCIAESTA). Positions 23–62 (YDVNEELENELDDLSDAAWLAKAAEDLQALDDFEESEESR) are excised as a propeptide. The Processing quadruplet motif signature appears at 59 to 62 (EESR).

Cleavage of the propeptide depends on the processing quadruplet motif (XXXR, with at least one of X being E). In terms of tissue distribution, expressed by the venom gland.

It localises to the secreted. In terms of biological role, has antimicrobial activity against Gram-positive bacteria (A.globiformis VKM Ac-1112 (MIC=0.5 uM), and B.subtilis VKM B-501 (MIC=1.0 uM)), Gram-negative bacteria (E.coli DH5-alpha (MIC=1.0 uM), E.coli MH1 (MIC=0.7 uM), and P.aeruginosa PAO1 (MIC=4.1 uM)), and yeasts (P.pastoris GS115 (MIC=17 uM), and S.cerevisiae Y190 (MIC&gt;33 uM)). Has a moderate hemolytic activity against rabbit erythrocytes. Causes paralysis, but is not lethal when injected into insect (M.domestica) larvae. The chain is M-zodatoxin-Lt1a from Lachesana tarabaevi (Spider).